The chain runs to 264 residues: Alkaline ceramidase 1 (264 aa).

The Lumenal segment spans residues 1 to 27 (MPSIFAYQSSEVDWCESNFQYSELVAE). Residues Asp13, Trp14, Glu16, Asn18, and Glu27 each contribute to the Ca(2+) site. Residues 28–48 (FYNTFSNIPFFIFGPLMMLLM) traverse the membrane as a helical segment. The Cytoplasmic segment spans residues 49-57 (HPYAQKRSR). A helical membrane pass occupies residues 58 to 78 (YIYVVWVLFMIIGLFSMYFHM). Residue His77 coordinates Zn(2+). Over 79–81 (TLS) the chain is Lumenal. A helical transmembrane segment spans residues 82 to 102 (FLGQLLDEIAILWLLGSGYSI). Topologically, residues 103 to 119 (WMPRCYFPSFLGGNRSQ) are cytoplasmic. Residues 120 to 137 (FIRLVFITTVVSTLLSFL) form a helical membrane-spanning segment. Arg138 is a topological domain (lumenal). Residues 139-159 (PTVNAYALNSIALHILYIVCQ) traverse the membrane as a helical segment. At 160 to 176 (EYRKTSNKELRHLIEVS) the chain is on the cytoplasmic side. A helical membrane pass occupies residues 177–197 (VVLWAVALTSWISDRLLCSFW). Over 198–206 (QRIHFFYLH) the chain is Lumenal. Zn(2+)-binding residues include His206 and His210. The chain crosses the membrane as a helical span at residues 207-227 (SIWHVLISITFPYGMVTMALV). The Cytoplasmic segment spans residues 228 to 264 (DANYEMPGETLKVRYWPRDSWPVGLPYVEIRGDDKDC).

This sequence belongs to the alkaline ceramidase family. Zn(2+) is required as a cofactor. In terms of tissue distribution, mainly expressed in epidermis.

The protein localises to the endoplasmic reticulum membrane. It carries out the reaction an N-acylsphing-4-enine + H2O = sphing-4-enine + a fatty acid. It catalyses the reaction N-tetracosanoyl-sphing-4-enine + H2O = tetracosanoate + sphing-4-enine. The catalysed reaction is an N-acylsphinganine + H2O = sphinganine + a fatty acid. The enzyme catalyses N-(9Z-octadecenoyl)-sphing-4-enine + H2O = sphing-4-enine + (9Z)-octadecenoate. It carries out the reaction N-(15Z-tetracosenoyl)-sphing-4-enine + H2O = (15Z)-tetracosenoate + sphing-4-enine. The protein operates within lipid metabolism; sphingolipid metabolism. Inhibited by sphingosine. Activity is Ca(2+)-dependent. In terms of biological role, endoplasmic reticulum ceramidase that catalyzes the hydrolysis of ceramides into sphingosine and free fatty acids at alkaline pH. Ceramides, sphingosine, and its phosphorylated form sphingosine-1-phosphate are bioactive lipids that mediate cellular signaling pathways regulating several biological processes including cell proliferation, apoptosis and differentiation. Exhibits a strong substrate specificity towards the natural stereoisomer of ceramides with D-erythro-sphingosine as a backbone and has a higher activity towards very long-chain unsaturated fatty acids like the C24:1-ceramide. May also hydrolyze dihydroceramides to produce dihydrosphingosine. ACER1 is a skin-specific ceramidase that regulates the levels of ceramides, sphingosine and sphingosine-1-phosphate in the epidermis, mediates the calcium-induced differentiation of epidermal keratinocytes and more generally plays an important role in skin homeostasis. The sequence is that of Alkaline ceramidase 1 from Homo sapiens (Human).